Here is a 126-residue protein sequence, read N- to C-terminus: Phosphoribosyl-ATP pyrophosphatase (126 aa).

The protein belongs to the PRA-PH family.

The protein resides in the cytoplasm. The catalysed reaction is 1-(5-phospho-beta-D-ribosyl)-ATP + H2O = 1-(5-phospho-beta-D-ribosyl)-5'-AMP + diphosphate + H(+). Its pathway is amino-acid biosynthesis; L-histidine biosynthesis; L-histidine from 5-phospho-alpha-D-ribose 1-diphosphate: step 2/9. In Variovorax paradoxus (strain S110), this protein is Phosphoribosyl-ATP pyrophosphatase.